We begin with the raw amino-acid sequence, 123 residues long: Protein crumbs homolog 3 (123 aa).

A signal peptide spans 1–26 (MASPGLGLLLALGLPLLPARWGRAWG). Residues 27–59 (QTLDPHVNENGTITPSAPGSGSNGALSQEAITA) are Extracellular-facing. Residue Asn36 is glycosylated (N-linked (GlcNAc...) asparagine). A helical transmembrane segment spans residues 60-80 (IIVVFSLLAAVLLAVGLVLLL). Residues 81–120 (RKLREKRQTQGTYRPSSEEQFNHAAEARAPQDSKETVRGC) lie on the Cytoplasmic side of the membrane. The segment at 87-123 (RQTQGTYRPSSEEQFNHAAEARAPQDSKETVRGCLPI) is disordered. Basic and acidic residues predominate over residues 96–117 (SSEEQFNHAAEARAPQDSKETV). Residues 119-123 (GCLPI) carry the PDZ-binding motif.

As to quaternary structure, component of a complex composed of CRB3, PALS1 and PATJ. Interacts (via C-terminus) with PALS1 (via PDZ domain). Interacts with PARD6A. Interacts (via intracellular domain) with EPB41L5. Interacts with WDR83.

The protein localises to the apical cell membrane. The protein resides in the cell junction. It is found in the tight junction. Functionally, involved in the establishment of cell polarity in mammalian epithelial cells. Regulates the morphogenesis of tight junctions. Involved in promoting phosphorylation and cytoplasmic retention of transcriptional coactivators YAP1 and WWTR1/TAZ which leads to suppression of TGFB1-dependent transcription of target genes such as CCN2/CTGF, SERPINE1/PAI1, SNAI1/SNAIL1 and SMAD7. The protein is Protein crumbs homolog 3 of Canis lupus familiaris (Dog).